The following is a 217-amino-acid chain: Adenylate kinase (217 aa).

10–15 (GAGKGT) contacts ATP. The segment at 30–59 (STGDIFRAAMKNETPMGIEAKKYIDKGELV) is NMP. Residues Thr31, Arg36, 57-59 (ELV), 85-88 (GFPR), and Gln92 contribute to the AMP site. The tract at residues 126–164 (GRFICRNCGATYHKLYNAPKVEGTCDVCGHHEFYQRDDD) is LID. An ATP-binding site is contributed by Arg127. Positions 130 and 133 each coordinate Zn(2+). Position 136–137 (136–137 (TY)) interacts with ATP. The Zn(2+) site is built by Cys150 and Cys153. Positions 161 and 172 each coordinate AMP. ATP is bound at residue Gln200.

It belongs to the adenylate kinase family. Monomer.

It is found in the cytoplasm. It catalyses the reaction AMP + ATP = 2 ADP. The protein operates within purine metabolism; AMP biosynthesis via salvage pathway; AMP from ADP: step 1/1. Functionally, catalyzes the reversible transfer of the terminal phosphate group between ATP and AMP. Plays an important role in cellular energy homeostasis and in adenine nucleotide metabolism. The polypeptide is Adenylate kinase (Limosilactobacillus reuteri subsp. reuteri (strain JCM 1112) (Lactobacillus reuteri)).